A 354-amino-acid polypeptide reads, in one-letter code: Peptide-N(4)-(N-acetyl-beta-D-glucosaminyl)asparagine amidase F (354 aa).

The signal sequence occupies residues 1–40; the sequence is MRKLLIFSISAYLMAGIVSCKGVDSATPVTEDRLALNAVN. A disulfide bond links Cys91 and Cys96. Catalysis depends on residues Asp100, Glu158, and Glu246. 2 disulfide bridges follow: Cys244-Cys248 and Cys271-Cys292.

As to quaternary structure, monomer.

The catalysed reaction is Hydrolysis of an N(4)-(acetyl-beta-D-glucosaminyl)asparagine residue in which the glucosamine residue may be further glycosylated, to yield a (substituted) N-acetyl-beta-D-glucosaminylamine and a peptide containing an aspartate residue.. Its function is as follows. Cleaves an entire glycan from a glycoprotein. Requires that the glycosylated asparagine moiety (reaction 1) be substituted on its amino (R1) and carboxyl (R2) terminus with a polypeptide chain. The chain is Peptide-N(4)-(N-acetyl-beta-D-glucosaminyl)asparagine amidase F (ngl) from Elizabethkingia miricola (Chryseobacterium miricola).